A 443-amino-acid polypeptide reads, in one-letter code: D-inositol 3-phosphate glycosyltransferase (443 aa).

Residue H26 coordinates 1D-myo-inositol 3-phosphate. UDP-N-acetyl-alpha-D-glucosamine contacts are provided by residues 32-33 (QP) and G40. Residues 37 to 42 (DAGGMN), K95, Y128, T152, and R172 each bind 1D-myo-inositol 3-phosphate. Residues R246, K251, and Q304 each coordinate UDP-N-acetyl-alpha-D-glucosamine. Mg(2+)-binding residues include Y313, R314, and A316. The UDP-N-acetyl-alpha-D-glucosamine site is built by E326 and E334. T340 lines the Mg(2+) pocket.

This sequence belongs to the glycosyltransferase group 1 family. MshA subfamily. In terms of assembly, homodimer.

It carries out the reaction 1D-myo-inositol 3-phosphate + UDP-N-acetyl-alpha-D-glucosamine = 1D-myo-inositol 2-acetamido-2-deoxy-alpha-D-glucopyranoside 3-phosphate + UDP + H(+). Functionally, catalyzes the transfer of a N-acetyl-glucosamine moiety to 1D-myo-inositol 3-phosphate to produce 1D-myo-inositol 2-acetamido-2-deoxy-glucopyranoside 3-phosphate in the mycothiol biosynthesis pathway. This Mycobacteroides abscessus (strain ATCC 19977 / DSM 44196 / CCUG 20993 / CIP 104536 / JCM 13569 / NCTC 13031 / TMC 1543 / L948) (Mycobacterium abscessus) protein is D-inositol 3-phosphate glycosyltransferase.